Reading from the N-terminus, the 1003-residue chain is NACHT, LRR and PYD domains-containing protein 9B (1003 aa).

The Pyrin domain occupies 1–91 (MAGSSGYGLL…SIMAQKKKRH (91 aa)). The region spanning 143–465 (VTAIVAGTTG…QDKDICVPVI (323 aa)) is the NACHT domain. 149–156 (GTTGEGKT) contacts ATP. LRR repeat units follow at residues 749-770 (KVKH…SLCE), 778-799 (VLQS…HLYE), 806-826 (HLSL…NLLC), 835-856 (TLKE…EISA), 863-883 (NLKT…RQLC), 892-913 (NLEC…DLAL), and 920-940 (TLNS…VVLC).

Sensor component of NLRP9 inflammasomes. Inflammasomes are supramolecular complexes that assemble in the cytosol in response to pathogens, such as rotavirus, but not encephalomyocarditis virus (EMCV), and play critical roles in innate immunity and inflammation. The core of NLRP9 inflammasomes consists of a signal sensor component (NLRP9), an adapter (ASC/PYCARD), which recruits an effector pro-inflammatory caspase (CASP1). Within the complex, NLRP9 and PYCARD interact via their respective DAPIN/pyrin domains. This interaction initiates speck formation (nucleation) which greatly enhances further addition of soluble PYCARD molecules to the speck in a prion-like polymerization process. Clustered PYCARD nucleates the formation of CASP1 filaments through the interaction of their respective CARD domains, acting as a platform for CASP1 polymerization. CASP1 filament formation increases local enzyme concentration, resulting in trans-autocleavage and activation. Active CASP1 then processes IL1B and IL18 precursors, leading to the release of mature cytokines in the extracellular milieu and inflammatory response. Interacts with DHX9 upon rotavirus infection; this interaction may trigger inflammasome activation and inflammatory response. In terms of tissue distribution, predominantly expressed in the intestine, including proximal and distal colon, cecum, ileum, jejunum and duodenum (at protein level). In the ileum, expressed in epithelial cells. Also expressed in oocytes at all follicular stages and in preimplantation embryos (at protein level). Although expression decreases in preimplantation embryos, it is still detectable in blastocyts.

The protein localises to the cytoplasm. The protein resides in the inflammasome. Its function is as follows. As the sensor component of the NLRP9 inflammasome, plays a crucial role in innate immunity and inflammation. In response to pathogens, including rotavirus, initiates the formation of the inflammasome polymeric complex, made of NLRP9, PYCARD and CASP1. Recruitment of proCASP1 to the inflammasome promotes its activation and CASP1-catalyzed IL1B and IL18 maturation and release in the extracellular milieu. The active cytokines stimulate inflammatory responses. Inflammasomes can also induce pyroptosis, an inflammatory form of programmed cell death. NLRP9 inflammasome activation may be initiated by DHX9 interaction with viral double-stranded RNA (dsRNA), preferentially to short dsRNA segments. In Mus musculus (Mouse), this protein is NACHT, LRR and PYD domains-containing protein 9B (Nlrp9b).